Here is a 112-residue protein sequence, read N- to C-terminus: Putative pterin-4-alpha-carbinolamine dehydratase (112 aa).

This sequence belongs to the pterin-4-alpha-carbinolamine dehydratase family.

It catalyses the reaction (4aS,6R)-4a-hydroxy-L-erythro-5,6,7,8-tetrahydrobiopterin = (6R)-L-erythro-6,7-dihydrobiopterin + H2O. In Shewanella halifaxensis (strain HAW-EB4), this protein is Putative pterin-4-alpha-carbinolamine dehydratase.